Reading from the N-terminus, the 316-residue chain is Formimidoylglutamase (316 aa).

6 residues coordinate Mn(2+): His-127, Asp-156, His-158, Asp-160, Asp-247, and Asp-249.

It belongs to the arginase family. The cofactor is Mn(2+).

The enzyme catalyses N-formimidoyl-L-glutamate + H2O = formamide + L-glutamate. The protein operates within amino-acid degradation; L-histidine degradation into L-glutamate; L-glutamate from N-formimidoyl-L-glutamate (hydrolase route): step 1/1. Catalyzes the conversion of N-formimidoyl-L-glutamate to L-glutamate and formamide. The protein is Formimidoylglutamase of Cupriavidus pinatubonensis (strain JMP 134 / LMG 1197) (Cupriavidus necator (strain JMP 134)).